A 746-amino-acid polypeptide reads, in one-letter code: NAD(P)H-quinone oxidoreductase subunit 5, chloroplastic (746 aa).

A run of 16 helical transmembrane segments spans residues 9–29 (WIIP…LLLF), 40–60 (WTFL…YLSI), 89–109 (IDPL…LVLI), 125–145 (FAYM…SNLI), 147–167 (VYFF…FWFT), 185–205 (GDFG…SFEF), 221–241 (VNLL…IAKS), 258–278 (TPIS…FLVA), 280–300 (LLPL…IGII), 327–347 (LGYM…FHLI), 354–374 (ALLF…VGYS), 396–416 (TAFL…CFWS), 425–445 (LLFS…TAFY), 547–567 (ILFP…IGIP), 608–628 (FSVS…KPFY), and 723–743 (YLFL…FFYF).

This sequence belongs to the complex I subunit 5 family. As to quaternary structure, NDH is composed of at least 16 different subunits, 5 of which are encoded in the nucleus.

Its subcellular location is the plastid. It is found in the chloroplast thylakoid membrane. It carries out the reaction a plastoquinone + NADH + (n+1) H(+)(in) = a plastoquinol + NAD(+) + n H(+)(out). The enzyme catalyses a plastoquinone + NADPH + (n+1) H(+)(in) = a plastoquinol + NADP(+) + n H(+)(out). Its function is as follows. NDH shuttles electrons from NAD(P)H:plastoquinone, via FMN and iron-sulfur (Fe-S) centers, to quinones in the photosynthetic chain and possibly in a chloroplast respiratory chain. The immediate electron acceptor for the enzyme in this species is believed to be plastoquinone. Couples the redox reaction to proton translocation, and thus conserves the redox energy in a proton gradient. This Olimarabidopsis pumila (Dwarf rocket) protein is NAD(P)H-quinone oxidoreductase subunit 5, chloroplastic (ndhF).